The sequence spans 96 residues: Secreted RxLR effector protein 123 (96 aa).

The N-terminal stretch at 1–22 is a signal peptide; that stretch reads MVGAYYVGIALLVAGGSQTAAG. The short motif at 49 to 70 is the RxLR-dEER element; that stretch reads RFLRKSRNPKDNLMLSEANEER. The tract at residues 57 to 96 is disordered; sequence PKDNLMLSEANEERTPSSPSNSLTEFIVSEPITTNVMRTE. The span at 87 to 96 shows a compositional bias: polar residues; it reads PITTNVMRTE.

This sequence belongs to the RxLR effector family.

The protein resides in the secreted. It localises to the host nucleus. The protein localises to the host cytoplasm. Secreted effector that dos not suppress the host cell death induced by cell death-inducing proteins. This Plasmopara viticola (Downy mildew of grapevine) protein is Secreted RxLR effector protein 123.